Reading from the N-terminus, the 229-residue chain is Ribonuclease 3 (229 aa).

One can recognise an RNase III domain in the interval 5 to 127; that stretch reads LARLERKLGY…LIGAIYLDAD (123 aa). Glu40 contributes to the Mg(2+) binding site. Asp44 is an active-site residue. Mg(2+) contacts are provided by Asp113 and Glu116. Residue Glu116 is part of the active site. The 71-residue stretch at 154 to 224 folds into the DRBM domain; it reads DPKTRLQEFL…AASALIALGV (71 aa).

Belongs to the ribonuclease III family. As to quaternary structure, homodimer. Requires Mg(2+) as cofactor.

It localises to the cytoplasm. The catalysed reaction is Endonucleolytic cleavage to 5'-phosphomonoester.. Functionally, digests double-stranded RNA. Involved in the processing of primary rRNA transcript to yield the immediate precursors to the large and small rRNAs (23S and 16S). Processes some mRNAs, and tRNAs when they are encoded in the rRNA operon. Processes pre-crRNA and tracrRNA of type II CRISPR loci if present in the organism. In Pseudomonas putida (strain GB-1), this protein is Ribonuclease 3.